The primary structure comprises 560 residues: Protein DA1-related 7 (560 aa).

UIM domains are found at residues 43–62 (SEAD…QETS), 92–111 (EEDQ…KGKS), and 155–174 (NEDA…KGQI). Residues 199-269 (SICDGCKSAI…HVCKKKFPGR (71 aa)) form the LIM zinc-binding domain.

In terms of assembly, interacts with ubiquitin.

Its function is as follows. Ubiquitin receptor that probably regulates developmental process. The sequence is that of Protein DA1-related 7 (DAR7) from Arabidopsis thaliana (Mouse-ear cress).